The chain runs to 63 residues: Conotoxin Pn-B01411 (63 aa).

An N-terminal signal peptide occupies residues 1 to 22 (MRCFPVFIILLLLMASAPSFDA). Residues 23 to 49 (RPKTEDDVPLSSFRDNLKRTLRTLLDP) constitute a propeptide that is removed on maturation. Position 62 is an isoleucine amide (isoleucine 62).

The protein belongs to the conotoxin T superfamily. In terms of processing, contains 2 disulfide bonds that can be either 'C1-C3, C2-C4' or 'C1-C4, C2-C3', since these disulfide connectivities have been observed for conotoxins with cysteine framework V (for examples, see AC P0DQQ7 and AC P81755). As to expression, expressed by the venom duct.

It is found in the secreted. The chain is Conotoxin Pn-B01411 from Conus pennaceus (Feathered cone).